A 540-amino-acid polypeptide reads, in one-letter code: Chaperonin GroEL (540 aa).

ATP-binding positions include 29–32 (TLGP), 86–90 (DGTTT), Gly-413, 476–478 (NAA), and Asp-492.

It belongs to the chaperonin (HSP60) family. Forms a cylinder of 14 subunits composed of two heptameric rings stacked back-to-back. Interacts with the co-chaperonin GroES.

The protein localises to the cytoplasm. It carries out the reaction ATP + H2O + a folded polypeptide = ADP + phosphate + an unfolded polypeptide.. Its function is as follows. Together with its co-chaperonin GroES, plays an essential role in assisting protein folding. The GroEL-GroES system forms a nano-cage that allows encapsulation of the non-native substrate proteins and provides a physical environment optimized to promote and accelerate protein folding. The chain is Chaperonin GroEL from Streptococcus pneumoniae (strain Hungary19A-6).